We begin with the raw amino-acid sequence, 292 residues long: 1D-myo-inositol 2-acetamido-2-deoxy-alpha-D-glucopyranoside deacetylase (292 aa).

Residues His12, Asp15, and His147 each coordinate Zn(2+).

This sequence belongs to the MshB deacetylase family. Zn(2+) serves as cofactor.

The enzyme catalyses 1D-myo-inositol 2-acetamido-2-deoxy-alpha-D-glucopyranoside + H2O = 1D-myo-inositol 2-amino-2-deoxy-alpha-D-glucopyranoside + acetate. Functionally, catalyzes the deacetylation of 1D-myo-inositol 2-acetamido-2-deoxy-alpha-D-glucopyranoside (GlcNAc-Ins) in the mycothiol biosynthesis pathway. This is 1D-myo-inositol 2-acetamido-2-deoxy-alpha-D-glucopyranoside deacetylase from Rhodococcus opacus (strain B4).